The following is a 473-amino-acid chain: Probable transporter MCH2 (473 aa).

Over 1 to 37 (MSEERHEDHHRDVENKLNLNGKDDINGNTSISIEVPD) the chain is Cytoplasmic. A helical transmembrane segment spans residues 38–58 (GGYGWFILLAFILYNFSTWGA). Residues 59–83 (NSGYAIYLAHYLENNTFAGGSKLDY) are Extracellular-facing. N72 is a glycosylation site (N-linked (GlcNAc...) asparagine). A helical transmembrane segment spans residues 84–105 (ASIGGLAFSCGLFFAPVITWLY). Residues 106–111 (HIFSIQ) lie on the Cytoplasmic side of the membrane. The helical transmembrane segment at 112 to 135 (FIIGLGILFQGAALLLAAFSVTLW) threads the bilayer. Topologically, residues 136 to 141 (EIYLTQ) are extracellular. The chain crosses the membrane as a helical span at residues 142–163 (GVLIGFGLAFIFIPSVTLIPLW). Residues 164–169 (FRNKRS) are Cytoplasmic-facing. Residues 170 to 186 (LASGIGTAGSGLGGIVF) traverse the membrane as a helical segment. Topologically, residues 187–200 (NLGMQSILQKRGVK) are extracellular. A helical transmembrane segment spans residues 201–220 (WALIAQCIICTSLSTIALML). Residues 221 to 243 (TRTTHQGLRQHKRSYKFELLDYD) are Cytoplasmic-facing. A helical membrane pass occupies residues 244 to 268 (VLSNFAVWLLFGFVSFAMLGYVVLL). The Extracellular segment spans residues 269–286 (YSLSDFTVSLGYTSKQGS). Residues 287-304 (YVSCMVSVGSLLGRPIVG) traverse the membrane as a helical segment. The Cytoplasmic segment spans residues 305-312 (HIADKYGS). The helical transmembrane segment at 313-332 (LTVGMILHLVMAILCWAMWI) threads the bilayer. At 333–342 (PCKNLATAIA) the chain is on the extracellular side. A helical transmembrane segment spans residues 343–362 (FGLLVGSIMGTIWPTIASIV). Over 363 to 370 (TRIVGLQK) the chain is Cytoplasmic. A helical transmembrane segment spans residues 371–394 (LPGTFGSTWIFMAAFALVAPIIGL). Topologically, residues 395–408 (ELRSTDTNGNDYYR) are extracellular. A helical transmembrane segment spans residues 409 to 433 (TAIFVGFAYFGVSLCQWLLRGFIIA). Residues 434–473 (RDEIAVREAYSADQNELHLNVKLSHMSKCLFRYKQLPRRV) lie on the Cytoplasmic side of the membrane.

This sequence belongs to the major facilitator superfamily. Monocarboxylate porter (TC 2.A.1.13) family.

Its subcellular location is the membrane. Probable transporter. Does not act in the transport of monocarboxylic acids across the plasma membrane. In Saccharomyces cerevisiae (strain ATCC 204508 / S288c) (Baker's yeast), this protein is Probable transporter MCH2 (MCH2).